The primary structure comprises 403 residues: G2/mitotic-specific cyclin-B1 (403 aa).

This sequence belongs to the cyclin family. Cyclin AB subfamily. Interacts with the CDC2 protein kinase to form a serine/threonine kinase holoenzyme complex also known as maturation promoting factor (MPF). The cyclin subunit imparts substrate specificity to the complex.

Functionally, essential for the control of the cell cycle at the G2/M (mitosis) transition. The protein is G2/mitotic-specific cyclin-B1 (ccnb1) of Anguilla japonica (Japanese eel).